We begin with the raw amino-acid sequence, 480 residues long: Aspartyl/glutamyl-tRNA(Asn/Gln) amidotransferase subunit B (480 aa).

The protein belongs to the GatB/GatE family. GatB subfamily. As to quaternary structure, heterotrimer of A, B and C subunits.

The enzyme catalyses L-glutamyl-tRNA(Gln) + L-glutamine + ATP + H2O = L-glutaminyl-tRNA(Gln) + L-glutamate + ADP + phosphate + H(+). It catalyses the reaction L-aspartyl-tRNA(Asn) + L-glutamine + ATP + H2O = L-asparaginyl-tRNA(Asn) + L-glutamate + ADP + phosphate + 2 H(+). Allows the formation of correctly charged Asn-tRNA(Asn) or Gln-tRNA(Gln) through the transamidation of misacylated Asp-tRNA(Asn) or Glu-tRNA(Gln) in organisms which lack either or both of asparaginyl-tRNA or glutaminyl-tRNA synthetases. The reaction takes place in the presence of glutamine and ATP through an activated phospho-Asp-tRNA(Asn) or phospho-Glu-tRNA(Gln). The polypeptide is Aspartyl/glutamyl-tRNA(Asn/Gln) amidotransferase subunit B (Caldicellulosiruptor saccharolyticus (strain ATCC 43494 / DSM 8903 / Tp8T 6331)).